The primary structure comprises 340 residues: Dihydroorotate dehydrogenase (quinone) (340 aa).

FMN contacts are provided by residues 63-67 and T87; that span reads AGLDK. A substrate-binding site is contributed by K67. Residue 112-116 coordinates substrate; that stretch reads NRMGF. FMN-binding residues include N140 and N173. Substrate is bound at residue N173. S176 (nucleophile) is an active-site residue. A substrate-binding site is contributed by N178. Positions 218 and 246 each coordinate FMN. 247-248 lines the substrate pocket; that stretch reads NT. FMN-binding positions include G269, G298, and 319-320; that span reads YT.

It belongs to the dihydroorotate dehydrogenase family. Type 2 subfamily. As to quaternary structure, monomer. The cofactor is FMN.

The protein localises to the cell membrane. It catalyses the reaction (S)-dihydroorotate + a quinone = orotate + a quinol. Its pathway is pyrimidine metabolism; UMP biosynthesis via de novo pathway; orotate from (S)-dihydroorotate (quinone route): step 1/1. In terms of biological role, catalyzes the conversion of dihydroorotate to orotate with quinone as electron acceptor. This Methylococcus capsulatus (strain ATCC 33009 / NCIMB 11132 / Bath) protein is Dihydroorotate dehydrogenase (quinone).